The sequence spans 258 residues: MMFKNFPFFKGKKDTSFDHLVEEVKKGYIPEHIAIIMDGNGRWAKRRAMPRIAGHHEGMQVVKKITKFASKLNVKVLTLYAFSTENWKRPKKEVDYLMKLPEEFLGTFLPELIEENVQVRVIGQQDRLPTHTRRAMEKAMEETKENTGLILNFALNYGSRDEIVSAVQHMMKDSEEGKVRVEDVSEEMLSSYLMTSSLPDPELLIRTSGELRISNFMLWQIAYSEFWFTDVYWPDFTEEHLLNAITDFQHRGRRFGGV.

The active site involves Asp38. Asp38 is a binding site for Mg(2+). Substrate contacts are provided by residues 39–42 (GNGR), Trp43, Arg51, His55, and 83–85 (STE). Asn86 serves as the catalytic Proton acceptor. Substrate is bound by residues Trp87, Arg89, Arg206, and 212–214 (RIS). Residue Glu225 participates in Mg(2+) binding.

This sequence belongs to the UPP synthase family. Homodimer. Mg(2+) is required as a cofactor.

In terms of biological role, catalyzes the condensation of isopentenyl diphosphate (IPP) with allylic pyrophosphates generating different type of terpenoids. The sequence is that of Isoprenyl transferase from Bacillus thuringiensis subsp. konkukian (strain 97-27).